Reading from the N-terminus, the 335-residue chain is Ribosomal RNA large subunit methyltransferase F (335 aa).

It belongs to the methyltransferase superfamily. METTL16/RlmF family.

Its subcellular location is the cytoplasm. It carries out the reaction adenosine(1618) in 23S rRNA + S-adenosyl-L-methionine = N(6)-methyladenosine(1618) in 23S rRNA + S-adenosyl-L-homocysteine + H(+). Specifically methylates the adenine in position 1618 of 23S rRNA. The protein is Ribosomal RNA large subunit methyltransferase F of Yersinia enterocolitica serotype O:8 / biotype 1B (strain NCTC 13174 / 8081).